We begin with the raw amino-acid sequence, 248 residues long: Probable transcriptional regulatory protein NGR_c27950 (248 aa).

It belongs to the TACO1 family.

The protein localises to the cytoplasm. The protein is Probable transcriptional regulatory protein NGR_c27950 of Sinorhizobium fredii (strain NBRC 101917 / NGR234).